A 122-amino-acid chain; its full sequence is UPF0102 protein BARBAKC583_1042 (122 aa).

This sequence belongs to the UPF0102 family.

The sequence is that of UPF0102 protein BARBAKC583_1042 from Bartonella bacilliformis (strain ATCC 35685 / KC583 / Herrer 020/F12,63).